The primary structure comprises 280 residues: Undecaprenyl-diphosphatase (280 aa).

Helical transmembrane passes span 1-21, 40-60, 89-109, 116-136, 146-166, 191-211, 227-247, and 260-280; these read MEWIQAAILGIVQGLTEFLPI, GAAFTAVSQLGTEAAVIVFFW, WLVVAGSIPIIVVGLFFQNAI, LWIVATTLIVFGVILAVADAV, LTVKHGILYGLAQCLALIPGV, FLLAIPAVLGSGFYELFKIVA, LATVIAFVVGYLIIGWFLKFI, and IALGLVVFVLLGFGVIPATLS.

This sequence belongs to the UppP family.

It localises to the cell membrane. The enzyme catalyses di-trans,octa-cis-undecaprenyl diphosphate + H2O = di-trans,octa-cis-undecaprenyl phosphate + phosphate + H(+). Functionally, catalyzes the dephosphorylation of undecaprenyl diphosphate (UPP). Confers resistance to bacitracin. This is Undecaprenyl-diphosphatase from Renibacterium salmoninarum (strain ATCC 33209 / DSM 20767 / JCM 11484 / NBRC 15589 / NCIMB 2235).